Here is a 525-residue protein sequence, read N- to C-terminus: ATP synthase subunit beta, mitochondrial (525 aa).

The N-terminal 44 residues, 1 to 44 (MLKKQALSGIRRFSLATKQSFVKTSYKLPRKSWLNTAKFNTIRY), are a transit peptide targeting the mitochondrion. 203–210 (GGAGVGKT) lines the ATP pocket.

The protein belongs to the ATPase alpha/beta chains family. As to quaternary structure, F-type ATPases have 2 components, CF(1) - the catalytic core - and CF(0) - the membrane proton channel. CF(1) has five subunits: alpha(3), beta(3), gamma(1), delta(1), epsilon(1). CF(0) has three main subunits: a, b and c.

Its subcellular location is the mitochondrion. The protein resides in the mitochondrion inner membrane. It catalyses the reaction ATP + H2O + 4 H(+)(in) = ADP + phosphate + 5 H(+)(out). Functionally, mitochondrial membrane ATP synthase (F(1)F(0) ATP synthase or Complex V) produces ATP from ADP in the presence of a proton gradient across the membrane which is generated by electron transport complexes of the respiratory chain. F-type ATPases consist of two structural domains, F(1) - containing the extramembraneous catalytic core, and F(0) - containing the membrane proton channel, linked together by a central stalk and a peripheral stalk. During catalysis, ATP synthesis in the catalytic domain of F(1) is coupled via a rotary mechanism of the central stalk subunits to proton translocation. Subunits alpha and beta form the catalytic core in F(1). Rotation of the central stalk against the surrounding alpha(3)beta(3) subunits leads to hydrolysis of ATP in three separate catalytic sites on the beta subunits. The protein is ATP synthase subunit beta, mitochondrial (atp2) of Schizosaccharomyces pombe (strain 972 / ATCC 24843) (Fission yeast).